Here is a 371-residue protein sequence, read N- to C-terminus: Histidinol-phosphate aminotransferase (371 aa).

K228 carries the post-translational modification N6-(pyridoxal phosphate)lysine.

It belongs to the class-II pyridoxal-phosphate-dependent aminotransferase family. Histidinol-phosphate aminotransferase subfamily. It depends on pyridoxal 5'-phosphate as a cofactor.

The catalysed reaction is L-histidinol phosphate + 2-oxoglutarate = 3-(imidazol-4-yl)-2-oxopropyl phosphate + L-glutamate. It participates in amino-acid biosynthesis; L-histidine biosynthesis; L-histidine from 5-phospho-alpha-D-ribose 1-diphosphate: step 7/9. This Methanococcus maripaludis (strain C7 / ATCC BAA-1331) protein is Histidinol-phosphate aminotransferase.